Consider the following 629-residue polypeptide: Methyl-accepting chemotaxis protein PscA (629 aa).

The Cytoplasmic segment spans residues 1 to 9 (MKNLGFSKK). Residues 10-30 (ILLAAALIVVVAFSVFIVIND) traverse the membrane as a helical segment. The Periplasmic portion of the chain corresponds to 31-276 (YRQRQSLKSS…AYAMLTEFRT (246 aa)). Positions 36–258 (SLKSSVKSEL…QGVATANWYV (223 aa)) constitute a Cache domain. The helical transmembrane segment at 277-297 (SAITAMVVVVMVIILLLGPLI) threads the bilayer. Positions 298-352 (RVLMQPLHQMGRAMRDIADGEGDLTKRLAITSHDEFGALAESFNHFVERIHTSIR) constitute an HAMP domain. Residues 298–629 (RVLMQPLHQM…LQQLVGSFRI (332 aa)) are Cytoplasmic-facing. The 237-residue stretch at 357–593 (TAAQLGEVAT…SINVDITHIN (237 aa)) folds into the Methyl-accepting transducer domain.

The protein belongs to the methyl-accepting chemotaxis (MCP) protein family.

The protein resides in the cell inner membrane. Its function is as follows. Chemotactic-signal transducers respond to changes in the concentration of attractants and repellents in the environment, transduce a signal from the outside to the inside of the cell, and facilitate sensory adaptation through the variation of the level of methylation. PscA recognizes specifically and with high affinity L-Asp, D-Asp and L-Glu. It exerts a double function, in mediating chemotaxis to these amino acids and in modulating cyclic di-GMP (c-di-GMP) levels, causing alterations in biofilm development. Plays a key role in the infection process. It may facilitate bacterial entry into the plant. This is Methyl-accepting chemotaxis protein PscA from Pseudomonas syringae pv. tomato (strain ATCC BAA-871 / DC3000).